The following is a 461-amino-acid chain: tRNA modification GTPase MnmE (461 aa).

(6S)-5-formyl-5,6,7,8-tetrahydrofolate-binding residues include Arg-27, Glu-89, and Arg-128. Residues 224 to 382 enclose the TrmE-type G domain; it reads GLATAIVGRP…LENAIEQLFF (159 aa). Asn-234 is a K(+) binding site. GTP-binding positions include 234 to 239, 253 to 259, and 278 to 281; these read NVGKSS, TDIAGTT, and DTAG. Position 238 (Ser-238) interacts with Mg(2+). The K(+) site is built by Thr-253, Ile-255, and Thr-258. Thr-259 contributes to the Mg(2+) binding site. Position 461 (Lys-461) interacts with (6S)-5-formyl-5,6,7,8-tetrahydrofolate.

It belongs to the TRAFAC class TrmE-Era-EngA-EngB-Septin-like GTPase superfamily. TrmE GTPase family. In terms of assembly, homodimer. Heterotetramer of two MnmE and two MnmG subunits. Requires K(+) as cofactor.

The protein localises to the cytoplasm. Its function is as follows. Exhibits a very high intrinsic GTPase hydrolysis rate. Involved in the addition of a carboxymethylaminomethyl (cmnm) group at the wobble position (U34) of certain tRNAs, forming tRNA-cmnm(5)s(2)U34. The polypeptide is tRNA modification GTPase MnmE (Lactobacillus johnsonii (strain CNCM I-12250 / La1 / NCC 533)).